A 216-amino-acid chain; its full sequence is MTRVLITGFAPFGGERVNPSWQAASLVAAEPPAGLAVTAAELPCVFGESLDALRDAIRADNPDLVLCLGQAGGRPGVTVERVGINVDDARIPDNAGGQPIDEPVVPDGPAAYFSTLPVKACVAAMREAGVPAAVSNTAGTFVCNHVAYGLGHLIATEFPHLRGGFAHVPWAPEQVPDGTAPALPPATVAHGLRALLAAAARTPAEQDLKVTEGATH.

Catalysis depends on residues glutamate 80, cysteine 143, and histidine 167.

Belongs to the peptidase C15 family. As to quaternary structure, homotetramer.

The protein localises to the cytoplasm. The catalysed reaction is Release of an N-terminal pyroglutamyl group from a polypeptide, the second amino acid generally not being Pro.. Its function is as follows. Removes 5-oxoproline from various penultimate amino acid residues except L-proline. The protein is Pyrrolidone-carboxylate peptidase (pcp) of Streptomyces coelicolor (strain ATCC BAA-471 / A3(2) / M145).